The following is a 21-amino-acid chain: Bibrotoxin (21 aa).

2 disulfides stabilise this stretch: Cys-1–Cys-15 and Cys-3–Cys-11.

Belongs to the endothelin/sarafotoxin family. In terms of tissue distribution, expressed by the venom gland.

Its subcellular location is the secreted. In terms of biological role, vasoconstrictor activity. These toxins cause cardiac arrest probably as a result of coronary vasospasm. May act by displaying agonistic activities towards endothelin-1 and -2 receptors (EDNRA and EDNRB). The polypeptide is Bibrotoxin (Atractaspis bibronii (Bibron's mole viper)).